The sequence spans 94 residues: Integration host factor subunit beta (94 aa).

The protein belongs to the bacterial histone-like protein family. Heterodimer of an alpha and a beta chain.

This protein is one of the two subunits of integration host factor, a specific DNA-binding protein that functions in genetic recombination as well as in transcriptional and translational control. The chain is Integration host factor subunit beta from Dechloromonas aromatica (strain RCB).